We begin with the raw amino-acid sequence, 367 residues long: Succinyl-diaminopimelate desuccinylase (367 aa).

Residue histidine 64 coordinates Zn(2+). The active site involves aspartate 66. Aspartate 95 contacts Zn(2+). Catalysis depends on glutamate 125, which acts as the Proton acceptor. Zn(2+)-binding residues include glutamate 126, glutamate 154, and histidine 339.

This sequence belongs to the peptidase M20A family. DapE subfamily. Homodimer. Zn(2+) is required as a cofactor. Co(2+) serves as cofactor.

The catalysed reaction is N-succinyl-(2S,6S)-2,6-diaminopimelate + H2O = (2S,6S)-2,6-diaminopimelate + succinate. The protein operates within amino-acid biosynthesis; L-lysine biosynthesis via DAP pathway; LL-2,6-diaminopimelate from (S)-tetrahydrodipicolinate (succinylase route): step 3/3. Catalyzes the hydrolysis of N-succinyl-L,L-diaminopimelic acid (SDAP), forming succinate and LL-2,6-diaminopimelate (DAP), an intermediate involved in the bacterial biosynthesis of lysine and meso-diaminopimelic acid, an essential component of bacterial cell walls. This Sulfurovum sp. (strain NBC37-1) protein is Succinyl-diaminopimelate desuccinylase.